We begin with the raw amino-acid sequence, 529 residues long: Variant surface glycoprotein MITAT 1.6 (529 aa).

The N-terminal stretch at 1-24 is a signal peptide; it reads MAVHRALAAYAISLYVLLPRKSGA. Intrachain disulfides connect Cys-39–Cys-170 and Cys-147–Cys-214. A glycan (N-linked (GlcNAc...) (high mannose) asparagine) is linked at Asn-456. Asp-506 carries GPI-anchor amidated aspartate lipidation. A propeptide spans 507–529 (removed in mature form); sequence SSILVTKKFALTVVSAAFVALLF.

Post-translationally, N-glycosylated; glycan is composed of 6 to 9 mannose residues.

It localises to the cell membrane. Functionally, VSG forms a coat on the surface of the parasite. The trypanosome evades the immune response of the host by expressing a series of antigenically distinct VSGs from an estimated 1000 VSG genes. This Trypanosoma brucei brucei protein is Variant surface glycoprotein MITAT 1.6.